The following is a 641-amino-acid chain: RING finger containing E3 ubiquitin-protein ligase WSV403 (641 aa).

The RING-type; atypical zinc-finger motif lies at 329 to 371; it reads CVGCLYDIEDEKRCYKLPCGHFMHTFCLSNKCSKANFRCVKCF.

It carries out the reaction S-ubiquitinyl-[E2 ubiquitin-conjugating enzyme]-L-cysteine + [acceptor protein]-L-lysine = [E2 ubiquitin-conjugating enzyme]-L-cysteine + N(6)-ubiquitinyl-[acceptor protein]-L-lysine.. The protein operates within protein modification; protein ubiquitination. In terms of biological role, probable E3 ubiquitin-protein ligase which accepts ubiquitin from an E2 ubiquitin-conjugating enzyme in the form of a thioester and then directly transfers the ubiquitin to targeted substrates. This White spot syndrome virus (isolate Shrimp/China/Tongan/1996) (WSSV) protein is RING finger containing E3 ubiquitin-protein ligase WSV403.